Reading from the N-terminus, the 356-residue chain is Putative zinc finger protein At1g68190 (356 aa).

Cys-14, Cys-17, Cys-37, His-42, Cys-57, Cys-60, Cys-80, and His-85 together coordinate Zn(2+). The B box-type 1; atypical zinc finger occupies 14 to 56; sequence CEFCKAYRAVVYCIADTANLCLTCDAKVHSANSLSGRHLRTVL. The B box-type 2; atypical zinc-finger motif lies at 57–97; that stretch reads CDSCKNQPCVVRCFDHKMFLCHGCNDKFHGGGSSEHRRRDL. The disordered stretch occupies residues 159–178; that stretch reads ENGSSSLTERGDPSPLELPK.

The protein belongs to the CONSTANS family.

It is found in the nucleus. The polypeptide is Putative zinc finger protein At1g68190 (Arabidopsis thaliana (Mouse-ear cress)).